Consider the following 490-residue polypeptide: Bifunctional protein HldE (490 aa).

The segment at 1 to 330 (MFSFDALLQA…RRILPHASLA (330 aa)) is ribokinase. 205 to 208 (NRKE) lines the ATP pocket. The active site involves Asp-275. Residues 358–490 (FTNGCFDILH…LVARAREGQS (133 aa)) are cytidylyltransferase.

It in the N-terminal section; belongs to the carbohydrate kinase PfkB family. In the C-terminal section; belongs to the cytidylyltransferase family. In terms of assembly, homodimer.

It carries out the reaction D-glycero-beta-D-manno-heptose 7-phosphate + ATP = D-glycero-beta-D-manno-heptose 1,7-bisphosphate + ADP + H(+). The enzyme catalyses D-glycero-beta-D-manno-heptose 1-phosphate + ATP + H(+) = ADP-D-glycero-beta-D-manno-heptose + diphosphate. It participates in nucleotide-sugar biosynthesis; ADP-L-glycero-beta-D-manno-heptose biosynthesis; ADP-L-glycero-beta-D-manno-heptose from D-glycero-beta-D-manno-heptose 7-phosphate: step 1/4. Its pathway is nucleotide-sugar biosynthesis; ADP-L-glycero-beta-D-manno-heptose biosynthesis; ADP-L-glycero-beta-D-manno-heptose from D-glycero-beta-D-manno-heptose 7-phosphate: step 3/4. Its function is as follows. Catalyzes the phosphorylation of D-glycero-D-manno-heptose 7-phosphate at the C-1 position to selectively form D-glycero-beta-D-manno-heptose-1,7-bisphosphate. In terms of biological role, catalyzes the ADP transfer from ATP to D-glycero-beta-D-manno-heptose 1-phosphate, yielding ADP-D-glycero-beta-D-manno-heptose. This is Bifunctional protein HldE from Rhodopseudomonas palustris (strain ATCC BAA-98 / CGA009).